Here is a 682-residue protein sequence, read N- to C-terminus: 1,4-alpha-glucan-branching enzyme (682 aa).

(1,4-alpha-D-glucosyl)n-binding residues include Trp88 and Lys124. Residue Asp342 is the Nucleophile of the active site. Glu397 serves as the catalytic Proton donor.

It belongs to the glycosyl hydrolase 13 family. GlgB subfamily.

Its subcellular location is the cytoplasm. The enzyme catalyses Transfers a segment of a (1-&gt;4)-alpha-D-glucan chain to a primary hydroxy group in a similar glucan chain.. Its pathway is glycan biosynthesis; glycogen biosynthesis. Glycogen-branching enzyme participates in the glycogen biosynthetic process along with glycogenin and glycogen synthase. Generates alpha-1,6-glucosidic branches from alpha-1,4-linked glucose chains, to increase solubility of the glycogen polymer. This chain is 1,4-alpha-glucan-branching enzyme, found in Cryptococcus neoformans var. grubii serotype A (strain H99 / ATCC 208821 / CBS 10515 / FGSC 9487) (Filobasidiella neoformans var. grubii).